The chain runs to 305 residues: UDP-3-O-acyl-N-acetylglucosamine deacetylase (305 aa).

Zn(2+) contacts are provided by histidine 78, histidine 237, and aspartate 241. The active-site Proton donor is histidine 264.

It belongs to the LpxC family. Zn(2+) serves as cofactor.

It carries out the reaction a UDP-3-O-[(3R)-3-hydroxyacyl]-N-acetyl-alpha-D-glucosamine + H2O = a UDP-3-O-[(3R)-3-hydroxyacyl]-alpha-D-glucosamine + acetate. It participates in glycolipid biosynthesis; lipid IV(A) biosynthesis; lipid IV(A) from (3R)-3-hydroxytetradecanoyl-[acyl-carrier-protein] and UDP-N-acetyl-alpha-D-glucosamine: step 2/6. Catalyzes the hydrolysis of UDP-3-O-myristoyl-N-acetylglucosamine to form UDP-3-O-myristoylglucosamine and acetate, the committed step in lipid A biosynthesis. The protein is UDP-3-O-acyl-N-acetylglucosamine deacetylase of Dechloromonas aromatica (strain RCB).